Consider the following 357-residue polypeptide: DnaJ homolog subfamily C member 25 (357 aa).

Residues 19-39 (WLLLAPLLLVPLLVRPAEALV) traverse the membrane as a helical segment. A J domain is found at 48 to 121 (DCYEVLGVSR…ETRKDYDYML (74 aa)). The next 2 helical transmembrane spans lie at 147-167 (VVIL…WWNS) and 241-261 (LLLF…AWYC).

This sequence belongs to the DNAJC25 family.

The protein resides in the membrane. This chain is DnaJ homolog subfamily C member 25 (Dnajc25), found in Rattus norvegicus (Rat).